The sequence spans 357 residues: Holliday junction branch migration complex subunit RuvB (357 aa).

Residues 1-15 (MAIQSDSLSSLPDSP) show a composition bias toward low complexity. Residues 1–30 (MAIQSDSLSSLPDSPRIVAPQPVSPNEESI) are disordered. The tract at residues 13-195 (DSPRIVAPQP…FGIVSRLEFY (183 aa)) is large ATPase domain (RuvB-L). Residues leucine 34, arginine 35, glycine 76, lysine 79, threonine 80, threonine 81, 142-144 (EDF), arginine 185, tyrosine 195, and arginine 232 contribute to the ATP site. Threonine 80 is a binding site for Mg(2+). The small ATPAse domain (RuvB-S) stretch occupies residues 196–266 (NTDELARIVT…AAGRALAMLD (71 aa)). Positions 269 to 357 (PQGLDVMDRK…SGGTGELFSK (89 aa)) are head domain (RuvB-H). Arginine 305, arginine 324, and arginine 329 together coordinate DNA.

This sequence belongs to the RuvB family. Homohexamer. Forms an RuvA(8)-RuvB(12)-Holliday junction (HJ) complex. HJ DNA is sandwiched between 2 RuvA tetramers; dsDNA enters through RuvA and exits via RuvB. An RuvB hexamer assembles on each DNA strand where it exits the tetramer. Each RuvB hexamer is contacted by two RuvA subunits (via domain III) on 2 adjacent RuvB subunits; this complex drives branch migration. In the full resolvosome a probable DNA-RuvA(4)-RuvB(12)-RuvC(2) complex forms which resolves the HJ.

The protein resides in the cytoplasm. It carries out the reaction ATP + H2O = ADP + phosphate + H(+). Functionally, the RuvA-RuvB-RuvC complex processes Holliday junction (HJ) DNA during genetic recombination and DNA repair, while the RuvA-RuvB complex plays an important role in the rescue of blocked DNA replication forks via replication fork reversal (RFR). RuvA specifically binds to HJ cruciform DNA, conferring on it an open structure. The RuvB hexamer acts as an ATP-dependent pump, pulling dsDNA into and through the RuvAB complex. RuvB forms 2 homohexamers on either side of HJ DNA bound by 1 or 2 RuvA tetramers; 4 subunits per hexamer contact DNA at a time. Coordinated motions by a converter formed by DNA-disengaged RuvB subunits stimulates ATP hydrolysis and nucleotide exchange. Immobilization of the converter enables RuvB to convert the ATP-contained energy into a lever motion, pulling 2 nucleotides of DNA out of the RuvA tetramer per ATP hydrolyzed, thus driving DNA branch migration. The RuvB motors rotate together with the DNA substrate, which together with the progressing nucleotide cycle form the mechanistic basis for DNA recombination by continuous HJ branch migration. Branch migration allows RuvC to scan DNA until it finds its consensus sequence, where it cleaves and resolves cruciform DNA. The sequence is that of Holliday junction branch migration complex subunit RuvB from Bordetella pertussis (strain Tohama I / ATCC BAA-589 / NCTC 13251).